A 422-amino-acid polypeptide reads, in one-letter code: 5-hydroxytryptamine receptor 1A (422 aa).

Topologically, residues 1 to 38 are extracellular; the sequence is MDVLGPGQGNNTTSSEGPFGTRANATGISDVTFSYQVI. 3 N-linked (GlcNAc...) asparagine glycosylation sites follow: asparagine 10, asparagine 11, and asparagine 24. A helical transmembrane segment spans residues 39–59; it reads TSLLLGTLIFCAVLGNACVVA. Topologically, residues 60 to 73 are cytoplasmic; it reads AIALERSLQNVANY. Residues 74 to 98 traverse the membrane as a helical segment; it reads LIGSLAVTDLMVSVLVLPMAALYQV. The Extracellular portion of the chain corresponds to 99 to 107; sequence LNKWTLGQV. A helical transmembrane segment spans residues 108 to 132; the sequence is TCDLFIALDVLCCTSSILHLCAIAL. A disulfide bond links cysteine 109 and cysteine 187. Serotonin is bound by residues aspartate 116 and cysteine 120. The short motif at 133–135 is the DRY motif; important for ligand-induced conformation changes element; that stretch reads DRY. Over 133–152 the chain is Cytoplasmic; that stretch reads DRYWAITDPIDYVNKRTPRR. A helical transmembrane segment spans residues 153–174; it reads AAALISLTWLVGFLISIPPMLG. The Extracellular segment spans residues 175-193; that stretch reads WRTPEDRSDPDACTISKDH. Residues 194–216 form a helical membrane-spanning segment; that stretch reads GYTIYSTFGAFYIPLLLMLVLYG. At 217–346 the chain is on the cytoplasmic side; sequence RIFRAARFRI…LARERKTVKT (130 aa). The interval 237 to 262 is disordered; it reads GADSRLGASPAPQRKKSANGELGSRE. 1D-myo-inositol 4-phosphate contacts are provided by lysine 345, threonine 346, and glycine 352. A helical transmembrane segment spans residues 347–370; that stretch reads LGIIMGTFILCWLPFFIVALVLPF. The Extracellular portion of the chain corresponds to 371–378; it reads CESSCHMP. The chain crosses the membrane as a helical span at residues 379–403; sequence TLLGAIINWLGYSNSLLNPVIYAYF. The NPxxY motif; important for ligand-induced conformation changes and signaling motif lies at 396-400; that stretch reads NPVIY. 3 residues coordinate 1D-myo-inositol 4-phosphate: phenylalanine 403, asparagine 404, and lysine 405. Residues 404–422 are Cytoplasmic-facing; sequence NKDFQNAFKKILKCKFCRR.

This sequence belongs to the G-protein coupled receptor 1 family. 5-hydroxytryptamine receptor subfamily. HTR1A sub-subfamily. Heterodimer; heterodimerizes with GPER1. Interacts with YIF1B. Interacts with GPR39 and GALR1.

It localises to the cell membrane. The protein localises to the cell projection. Its subcellular location is the dendrite. Its activity is regulated as follows. G-protein coupled receptor activity is regulated by lipids: phosphatidylinositol 4-phosphate increases HTR1A-mediated activity. Its function is as follows. G-protein coupled receptor for 5-hydroxytryptamine (serotonin). Also functions as a receptor for various drugs and psychoactive substances. Ligand binding causes a conformation change that triggers signaling via guanine nucleotide-binding proteins (G proteins) and modulates the activity of downstream effectors, such as adenylate cyclase. HTR1A is coupled to G(i)/G(o) G alpha proteins and mediates inhibitory neurotransmission: signaling inhibits adenylate cyclase activity and activates a phosphatidylinositol-calcium second messenger system that regulates the release of Ca(2+) ions from intracellular stores. Beta-arrestin family members regulate signaling by mediating both receptor desensitization and resensitization processes. This Equus caballus (Horse) protein is 5-hydroxytryptamine receptor 1A (HTR1A).